The sequence spans 486 residues: BTB/POZ domain and ankyrin repeat-containing protein BOP (486 aa).

Residues 25–115 (SDVTFSVEGR…LYSGQVSIVP (91 aa)) enclose the BTB domain. A C2HC NPR-type zinc finger spans residues 121–135 (RPNCGERGCWHTHCS). Zn(2+)-binding residues include Cys-124, Cys-129, His-131, and Cys-134. ANK repeat units lie at residues 257-286 (QKIR…LNLD), 287-316 (EALA…DVNY), 321-350 (AGKT…DPNV), and 354-388 (DNVT…KLRL). Disordered stretches follow at residues 403–442 (EEGN…NHNI) and 464–486 (QMSD…HHDY). Composition is skewed to low complexity over residues 406-418 (NANN…TTTT) and 432-442 (SSSSSGNNHNI). Over residues 466–475 (SDDHGGRHGD) the composition is skewed to basic and acidic residues.

This sequence belongs to the plant 'ANKYRIN-BTB/POZ' family. 'NOOT-BOP-COCH-like' (NBCL) subfamily. In terms of assembly, homodimer. Expressed in xylem vessels and parenchyma cells of pedicel vascular tissue in the abscission zone (AZ). Accumulates in developing root nodules and present in roots, especially in the upper part.

It is found in the nucleus. The protein resides in the cytoplasm. The protein localises to the cell membrane. Its pathway is protein modification; protein ubiquitination. Its function is as follows. May act as a substrate-specific adapter of an E3 ubiquitin-protein ligase complex (CUL3-RBX1-BTB) which mediates the ubiquitination and subsequent proteasomal degradation of target proteins. Transcriptional co-regulator involved in promoting the fate and determination of leaf and flower meristems. Required for the abscission of senescent organs, probably by regulating the cell wall disorganization in abscission zones (AZs, e.g. pulvini at the base of leaves). Involved in the coordination of the symbiotic nodule developmental program; promotes the formation of root nodules by interacting directly with APP1 to modulate the expression of the nuclear transcription factor Y subunit (NF-YA1), a key nodulin. Necessary for the robust maintenance of nodule identity throughout the nodule developmental program. The polypeptide is BTB/POZ domain and ankyrin repeat-containing protein BOP (Lupinus luteus (European yellow lupine)).